The following is a 371-amino-acid chain: Peptide chain release factor 2 (371 aa).

Gln253 carries the post-translational modification N5-methylglutamine.

The protein belongs to the prokaryotic/mitochondrial release factor family. Methylated by PrmC. Methylation increases the termination efficiency of RF2.

It is found in the cytoplasm. Functionally, peptide chain release factor 2 directs the termination of translation in response to the peptide chain termination codons UGA and UAA. The sequence is that of Peptide chain release factor 2 from Mycobacterium sp. (strain JLS).